The following is a 233-amino-acid chain: Hydroxyacylglutathione hydrolase (233 aa).

7 residues coordinate Zn(2+): His52, His54, Asp56, His57, His108, Asp125, and His163.

This sequence belongs to the metallo-beta-lactamase superfamily. Glyoxalase II family. Monomer. Requires Zn(2+) as cofactor.

The catalysed reaction is an S-(2-hydroxyacyl)glutathione + H2O = a 2-hydroxy carboxylate + glutathione + H(+). Its pathway is secondary metabolite metabolism; methylglyoxal degradation; (R)-lactate from methylglyoxal: step 2/2. Its function is as follows. Thiolesterase that catalyzes the hydrolysis of S-D-lactoyl-glutathione to form glutathione and D-lactic acid. The protein is Hydroxyacylglutathione hydrolase of Histophilus somni (strain 129Pt) (Haemophilus somnus).